The primary structure comprises 814 residues: MDLSATPSRSKSGLRSSPRKPVAAPAVAQMDLSTPSKPTPRRKPKAPPVAAPMSPVTPSSVRRSSRLLETPTKVTSETPVKPTPTPKRKRAAPSPSPKTPTQSEPKRQRQRQRQRQQPKKPKKRAYYRKVVYDGGEFAAGDDVYVKRRDGAESDAEDPEAEECRVCFRAGAAVMVECDVCLGGFHLRCVRPPLRRVPEGDWACPYCEAERAGKAIERPKPPEGKRIVRTAKEKLLSSDLWAARIESLWREPDGIFWAKVRWYIIPEETAAGRQPHNLRRELYRTNDLADIEMETILRHCYVMSPKEFKDASDQGDDVFYCEYEYDIHWHNFKRLADIDDEPETKEDPGDEPYNAGNDYVSDSDEDSEYDEEEEPTKCSSARTHQSHALAANLRKGRTYGLQKIGIRKIPEHVRCHQKTNLEKAKATLLLATLPKSLPCRDKEMEEISAFVKDAICNDQCLGRCLYIHGVPGTGKTMSVLAVMRRLRSELDSGNLRPYSFIEINGLKLASPENIYKVIYEQLSGHRVGWKKALHYLTEHFSGGTKIGKQANQPIILLIDELDLLLTRNQSVLYNILDWPTRPNSNLVVIGIANTMDLPEKLLPRISSRMGIQRLCFGPYNYRQLQEIITSRLKGIDAFEDQAIEFASRKVAAMSGDARRALEICRRAAEFADYRVKQSGHTSVNRGKNVVCMGDIEAAIQEVFQAPHIQVMKNCPKFGKIILVAMVHELYRSGLGEVMFDKLAATVLSWCHVNRELLPGYDTLLKICCKLGEGKIILCEEGTKHKLQKLQLNYPSDDVTFALKESPDIPWLSKYL.

Residues 1–15 are compositionally biased toward polar residues; the sequence is MDLSATPSRSKSGLR. A disordered region spans residues 1–127; the sequence is MDLSATPSRS…PKKPKKRAYY (127 aa). Composition is skewed to low complexity over residues 51–62 and 69–80; these read APMSPVTPSSVR and ETPTKVTSETPV. Residues 105-112 carry the Nuclear localization signal motif; sequence PKRQRQRQ. A compositionally biased stretch (basic residues) spans 108-127; that stretch reads QRQRQRQRQQPKKPKKRAYY. Residues 157-181 are histone H3 binding; it reads DPEAEECRVCFRAGAAVMVECDVCL. A PHD-type zinc finger spans residues 160–209; the sequence is AEECRVCFRAGAAVMVECDVCLGGFHLRCVRPPLRRVPEGDWACPYCEAE. Residues C163, C166, C177, C180, H185, and C188 each contribute to the Zn(2+) site. The interval 197-201 is histone H3 binding; sequence PEGDW. Residues C203 and C206 each contribute to the Zn(2+) site. A BAH domain is found at 218-335; it reads PKPPEGKRIV…IHWHNFKRLA (118 aa). Residues 310-315 are histone H3 binding; it reads ASDQGD. Composition is skewed to acidic residues over residues 339 to 349 and 360 to 373; these read DEPETKEDPGD and SDSD…EEEE. A disordered region spans residues 339–384; it reads DEPETKEDPGDEPYNAGNDYVSDSDEDSEYDEEEEPTKCSSARTHQ. The tract at residues 433 to 804 is necessary and sufficient for ORC complex assembly; it reads PKSLPCRDKE…DDVTFALKES (372 aa). Residues 468–475 and 468–476 each bind ATP; these read GVPGTGKT and GVPGTGKTM. Mg(2+) contacts are provided by D558 and E559. 3 residues coordinate ATP: E559, N592, and R657.

Belongs to the ORC1 family. As to quaternary structure, component of the origin recognition complex (ORC) composed of at least ORC1, ORC2, ORC3, ORC4, ORC5 and ORC6. ORC is regulated in a cell-cycle and development dependent manner. It is sequentially assembled at the exit from anaphase of mitosis and disassembled as cells enter S phase. Binds unmodified and methylated histone H3. In terms of tissue distribution, expressed strongly in root tips and shoot apical meristem (SAM), and weakly in young leaves. Not detected in mature leaves.

The protein resides in the nucleus. Essential protein. Component of the origin recognition complex (ORC) that binds origins of replication. It has a role in both chromosomal replication and mating type transcriptional silencing. Binds to the ARS consensus sequence (ACS) of origins of replication. H3K4me3 effector that positively regulates the transcription of a subset of genes. Required for cell proliferation. In Oryza sativa subsp. japonica (Rice), this protein is Origin of replication complex subunit 1.